Reading from the N-terminus, the 216-residue chain is Probable chemoreceptor glutamine deamidase CheD (216 aa).

Belongs to the CheD family.

The catalysed reaction is L-glutaminyl-[protein] + H2O = L-glutamyl-[protein] + NH4(+). In terms of biological role, probably deamidates glutamine residues to glutamate on methyl-accepting chemotaxis receptors (MCPs), playing an important role in chemotaxis. The protein is Probable chemoreceptor glutamine deamidase CheD of Halorhodospira halophila (strain DSM 244 / SL1) (Ectothiorhodospira halophila (strain DSM 244 / SL1)).